We begin with the raw amino-acid sequence, 156 residues long: Transcription elongation factor GreA (156 aa).

Positions 12 to 72 (YKKLEDELST…KEIEHELKYA (61 aa)) form a coiled coil.

Belongs to the GreA/GreB family.

Necessary for efficient RNA polymerase transcription elongation past template-encoded arresting sites. The arresting sites in DNA have the property of trapping a certain fraction of elongating RNA polymerases that pass through, resulting in locked ternary complexes. Cleavage of the nascent transcript by cleavage factors such as GreA or GreB allows the resumption of elongation from the new 3'terminus. GreA releases sequences of 2 to 3 nucleotides. This chain is Transcription elongation factor GreA, found in Dehalococcoides mccartyi (strain ATCC BAA-2266 / KCTC 15142 / 195) (Dehalococcoides ethenogenes (strain 195)).